The following is a 100-amino-acid chain: ATP synthase subunit c (100 aa).

Helical transmembrane passes span 27–47 and 72–92; these read SVIAAGIGLGLAALGGAIGMG and FIALAMIEAQVIYALVITLIV.

The protein belongs to the ATPase C chain family. F-type ATPases have 2 components, F(1) - the catalytic core - and F(0) - the membrane proton channel. F(1) has five subunits: alpha(3), beta(3), gamma(1), delta(1), epsilon(1). F(0) has three main subunits: a(1), b(2) and c(10-14). The alpha and beta chains form an alternating ring which encloses part of the gamma chain. F(1) is attached to F(0) by a central stalk formed by the gamma and epsilon chains, while a peripheral stalk is formed by the delta and b chains.

Its subcellular location is the cell inner membrane. In terms of biological role, f(1)F(0) ATP synthase produces ATP from ADP in the presence of a proton or sodium gradient. F-type ATPases consist of two structural domains, F(1) containing the extramembraneous catalytic core and F(0) containing the membrane proton channel, linked together by a central stalk and a peripheral stalk. During catalysis, ATP synthesis in the catalytic domain of F(1) is coupled via a rotary mechanism of the central stalk subunits to proton translocation. This Campylobacter curvus (strain 525.92) protein is ATP synthase subunit c.